The chain runs to 182 residues: NADH-quinone oxidoreductase subunit I (182 aa).

4Fe-4S ferredoxin-type domains are found at residues 52 to 82 and 92 to 121; these read LTRD…LQKA and DFFR…LTPD. 8 residues coordinate [4Fe-4S] cluster: cysteine 62, cysteine 65, cysteine 68, cysteine 72, cysteine 101, cysteine 104, cysteine 107, and cysteine 111.

Belongs to the complex I 23 kDa subunit family. In terms of assembly, NDH-1 is composed of 13 different subunits. Subunits NuoA, H, J, K, L, M, N constitute the membrane sector of the complex. The cofactor is [4Fe-4S] cluster.

It localises to the cell inner membrane. It catalyses the reaction a quinone + NADH + 5 H(+)(in) = a quinol + NAD(+) + 4 H(+)(out). NDH-1 shuttles electrons from NADH, via FMN and iron-sulfur (Fe-S) centers, to quinones in the respiratory chain. The immediate electron acceptor for the enzyme in this species is believed to be ubiquinone. Couples the redox reaction to proton translocation (for every two electrons transferred, four hydrogen ions are translocated across the cytoplasmic membrane), and thus conserves the redox energy in a proton gradient. This chain is NADH-quinone oxidoreductase subunit I, found in Pseudomonas savastanoi pv. phaseolicola (strain 1448A / Race 6) (Pseudomonas syringae pv. phaseolicola (strain 1448A / Race 6)).